We begin with the raw amino-acid sequence, 808 residues long: Ribosome biogenesis protein BOP1 homolog (808 aa).

Residues 1–56 form a disordered region; that stretch reads MTSPKGKPSPKRSAPAPTTAALTPRTEERTEGATSSASASASSHISSSFDSPRDDT. Composition is skewed to low complexity over residues 12 to 24 and 33 to 50; these read RSAPAPTTAALTP and ATSSASASASSHISSSFD. WD repeat units lie at residues 430–469, 640–680, 682–720, 724–766, and 777–808; these read GHTATVRSVSVSPNGQYLATGCDDHLVRVFEVQTGRLMKR, KFSE…RRFK, SGGVTTCLSIHPEGDNFLVGDTTSHTSWFDMDFSDKPYK, SHRG…DYNK, and KHQRPVYAVAWHPTLAWLFTSTEDGVVTAWTE.

This sequence belongs to the WD repeat BOP1/ERB1 family.

The protein localises to the nucleus. The protein resides in the nucleolus. Its subcellular location is the nucleoplasm. Required for maturation of ribosomal RNAs and formation of the large ribosomal subunit. In Leishmania infantum, this protein is Ribosome biogenesis protein BOP1 homolog.